The primary structure comprises 877 residues: Phosphoenolpyruvate carboxylase (877 aa).

Catalysis depends on residues His-137 and Lys-542.

It belongs to the PEPCase type 1 family. The cofactor is Mg(2+).

The catalysed reaction is oxaloacetate + phosphate = phosphoenolpyruvate + hydrogencarbonate. Forms oxaloacetate, a four-carbon dicarboxylic acid source for the tricarboxylic acid cycle. In Tolumonas auensis (strain DSM 9187 / NBRC 110442 / TA 4), this protein is Phosphoenolpyruvate carboxylase.